The sequence spans 207 residues: Large ribosomal subunit protein uL4 (207 aa).

The disordered stretch occupies residues 44-78; that stretch reads MRQGTHKTKNRAEVSGGGRKPWRQKGTGRARQGSI.

The protein belongs to the universal ribosomal protein uL4 family. In terms of assembly, part of the 50S ribosomal subunit.

Its function is as follows. One of the primary rRNA binding proteins, this protein initially binds near the 5'-end of the 23S rRNA. It is important during the early stages of 50S assembly. It makes multiple contacts with different domains of the 23S rRNA in the assembled 50S subunit and ribosome. Functionally, forms part of the polypeptide exit tunnel. The protein is Large ribosomal subunit protein uL4 of Geobacillus kaustophilus (strain HTA426).